The chain runs to 354 residues: Uroporphyrinogen decarboxylase (354 aa).

Substrate is bound by residues 25–29 (RQAGR), Asp-75, Tyr-152, Thr-207, and His-330.

The protein belongs to the uroporphyrinogen decarboxylase family. Homodimer.

It is found in the cytoplasm. The enzyme catalyses uroporphyrinogen III + 4 H(+) = coproporphyrinogen III + 4 CO2. The protein operates within porphyrin-containing compound metabolism; protoporphyrin-IX biosynthesis; coproporphyrinogen-III from 5-aminolevulinate: step 4/4. Its function is as follows. Catalyzes the decarboxylation of four acetate groups of uroporphyrinogen-III to yield coproporphyrinogen-III. This chain is Uroporphyrinogen decarboxylase, found in Xanthomonas oryzae pv. oryzae (strain MAFF 311018).